Here is a 1887-residue protein sequence, read N- to C-terminus: DNA-directed RNA polymerase II subunit RPB1 (1887 aa).

Zn(2+) contacts are provided by cysteine 67, cysteine 70, cysteine 77, histidine 80, cysteine 107, cysteine 110, cysteine 150, and cysteine 176. Positions 156 to 178 (MDLTKENQQPDPNKKPGHGGCGH) are disordered. Mg(2+) contacts are provided by aspartate 487, aspartate 489, and aspartate 491. Residues 825–837 (PSEFYFHAMGGRE) are bridging helix. Lysine 1260 is covalently cross-linked (Glycyl lysine isopeptide (Lys-Gly) (interchain with G-Cter in ubiquitin)). Disordered regions lie at residues 1528–1565 (TPGG…GPSM) and 1579–1887 (YSPT…ESED). 3 stretches are compositionally biased toward low complexity: residues 1529 to 1565 (PGGP…GPSM), 1579 to 1610 (YSPT…PTSP), and 1626 to 1650 (PQST…PTVQ). Residues 1579 to 1585 (YSPTSPN) form repeat 1. Positions 1579–1881 (YSPTSPNYTA…SPAYSPSSPT (303 aa)) are C-terminal domain (CTD); 32 X 7 AA approximate tandem repeats of Y-[ST]-P-[STNVAPGN]-[STGMA]-[PSTR]-[SNAGCQKTLRIMH]. One copy of the 2; approximate repeat lies at 1586–1592 (YTASSPG). 4 tandem repeats follow at residues 1598 to 1604 (YSPSSPN), 1605 to 1611 (YSPTSPL), 1631 to 1637 (YSPSSSG), and 1638 to 1644 (YSPTSPV). Over residues 1651–1664 (FQSSPSFAGSGSNI) the composition is skewed to polar residues. Low complexity predominate over residues 1665 to 1760 (YSPGNAYSPS…GVKYSPTSPT (96 aa)). Repeat copies occupy residues 1671 to 1677 (YSPSSSN), 1678 to 1684 (YSPNSPS), 1685 to 1691 (YSPTSPS), 1692 to 1698 (YSPSSPS), 1699 to 1705 (YSPTSPC), 1706 to 1712 (YSPTSPS), 1713 to 1719 (YSPTSPN), 1720 to 1726 (YTPVTPS), 1727 to 1733 (YSPTSPN), 1740 to 1746 (YSPASPA), 1754 to 1760 (YSPTSPT), 1761 to 1767 (YSPPSPS), 1777 to 1783 (YTPGSPQ), 1784 to 1790 (YSPASPK), 1791 to 1797 (YSPTSPL), 1798 to 1804 (YSPSSPQ), and 1811 to 1817 (YSPTGST). Positions 1776 to 1786 (QYTPGSPQYSP) are enriched in polar residues. Residues 1788–1813 (SPKYSPTSPLYSPSSPQHSPSNQYSP) are compositionally biased toward low complexity. Residues 1814–1831 (TGSTYSATSPRYSPNMSI) are compositionally biased toward polar residues. A 24; approximate repeat occupies 1818–1824 (YSATSPR). A run of 8 repeats spans residues 1825-1831 (YSPNMSI), 1832-1838 (YSPSSTK), 1839-1845 (YSPTSPT), 1846-1852 (YTPTARN), 1853-1859 (YSPTSPM), 1860-1866 (YSPTAPS), 1868-1874 (YSPTSPA), and 1875-1881 (YSPSSPT). The segment covering 1832–1849 (YSPSSTKYSPTSPTYTPT) has biased composition (low complexity). Over residues 1850–1859 (ARNYSPTSPM) the composition is skewed to polar residues. Positions 1860 to 1881 (YSPTAPSHYSPTSPAYSPSSPT) are enriched in low complexity.

Belongs to the RNA polymerase beta' chain family. Component of the RNA polymerase II (Pol II) complex consisting of 12 subunits. The tandem 7 residues repeats in the C-terminal domain (CTD) can be highly phosphorylated. The phosphorylation activates Pol II. Phosphorylation occurs mainly at residues 'Ser-2' and 'Ser-5' of the heptapeptide repeat. The phosphorylation state is believed to result from the balanced action of site-specific CTD kinases and phosphatase, and a 'CTD code' that specifies the position of Pol II within the transcription cycle has been proposed. In terms of processing, following transcription stress, the elongating form of RNA polymerase II (RNA pol IIo) is polyubiquitinated via 'Lys-63'-linkages on Lys-1260 at DNA damage sites without leading to degradation: ubiquitination promotes RNA pol IIo backtracking to allow access by the transcription-coupled nucleotide excision repair (TC-NER) machinery. Subsequent DEF1-dependent polyubiquitination by the elongin complex via 'Lys-48'-linkages may lead to proteasome-mediated degradation; presumably at stalled RNA pol II where TC-NER has failed, to halt global transcription and enable 'last resort' DNA repair pathways.

Its subcellular location is the nucleus. The catalysed reaction is RNA(n) + a ribonucleoside 5'-triphosphate = RNA(n+1) + diphosphate. Functionally, DNA-dependent RNA polymerase catalyzes the transcription of DNA into RNA using the four ribonucleoside triphosphates as substrates. Largest and catalytic component of RNA polymerase II which synthesizes mRNA precursors and many functional non-coding RNAs. Forms the polymerase active center together with the second largest subunit. Pol II is the central component of the basal RNA polymerase II transcription machinery. It is composed of mobile elements that move relative to each other. RPB1 is part of the core element with the central large cleft, the clamp element that moves to open and close the cleft and the jaws that are thought to grab the incoming DNA template. At the start of transcription, a single-stranded DNA template strand of the promoter is positioned within the central active site cleft of Pol II. A bridging helix emanates from RPB1 and crosses the cleft near the catalytic site and is thought to promote translocation of Pol II by acting as a ratchet that moves the RNA-DNA hybrid through the active site by switching from straight to bent conformations at each step of nucleotide addition. During transcription elongation, Pol II moves on the template as the transcript elongates. Elongation is influenced by the phosphorylation status of the C-terminal domain (CTD) of Pol II largest subunit (RPB1), which serves as a platform for assembly of factors that regulate transcription initiation, elongation, termination and mRNA processing. This is DNA-directed RNA polymerase II subunit RPB1 from Drosophila melanogaster (Fruit fly).